A 131-amino-acid polypeptide reads, in one-letter code: Large ribosomal subunit protein bL17 (131 aa).

It belongs to the bacterial ribosomal protein bL17 family. In terms of assembly, part of the 50S ribosomal subunit. Contacts protein L32.

This Polynucleobacter necessarius subsp. necessarius (strain STIR1) protein is Large ribosomal subunit protein bL17.